The following is a 218-amino-acid chain: Large ribosomal subunit protein bL25 (218 aa).

The tract at residues 178 to 218 (VTPPTVTEDPDATEEDNTTAESVEATGERNDDNLDRPGRVE) is disordered. The span at 185–195 (EDPDATEEDNT) shows a compositional bias: acidic residues. Positions 203–218 (TGERNDDNLDRPGRVE) are enriched in basic and acidic residues.

Belongs to the bacterial ribosomal protein bL25 family. CTC subfamily. In terms of assembly, part of the 50S ribosomal subunit; part of the 5S rRNA/L5/L18/L25 subcomplex. Contacts the 5S rRNA. Binds to the 5S rRNA independently of L5 and L18.

Its function is as follows. This is one of the proteins that binds to the 5S RNA in the ribosome where it forms part of the central protuberance. The sequence is that of Large ribosomal subunit protein bL25 from Shouchella clausii (strain KSM-K16) (Alkalihalobacillus clausii).